Consider the following 268-residue polypeptide: Aliphatic sulfonates import ATP-binding protein SsuB 2 (268 aa).

The region spanning 15–236 (LAVRKLQKTF…VRGSHRLAAL (222 aa)) is the ABC transporter domain. 47–54 (GRSGCGKS) contributes to the ATP binding site.

It belongs to the ABC transporter superfamily. Aliphatic sulfonates importer (TC 3.A.1.17.2) family. As to quaternary structure, the complex is composed of two ATP-binding proteins (SsuB), two transmembrane proteins (SsuC) and a solute-binding protein (SsuA).

It localises to the cell inner membrane. The enzyme catalyses ATP + H2O + aliphatic sulfonate-[sulfonate-binding protein]Side 1 = ADP + phosphate + aliphatic sulfonateSide 2 + [sulfonate-binding protein]Side 1.. Its function is as follows. Part of the ABC transporter complex SsuABC involved in aliphatic sulfonates import. Responsible for energy coupling to the transport system. The chain is Aliphatic sulfonates import ATP-binding protein SsuB 2 from Pseudomonas fluorescens (strain ATCC BAA-477 / NRRL B-23932 / Pf-5).